Reading from the N-terminus, the 153-residue chain is Antibacterial peptide PMAP-23 (153 aa).

The first 29 residues, 1-29 (METQRASLCLGRWSLWLLLLGLVVPSASA), serve as a signal peptide directing secretion. Residue Q30 is modified to Pyrrolidone carboxylic acid. A propeptide spanning residues 30–130 (QALSYREAVL…DITCNQLQSV (101 aa)) is cleaved from the precursor. The segment at 61–80 (DQPPKADEDPGTPKPVSFTV) is disordered. 2 disulfides stabilise this stretch: C85–C96 and C107–C124.

This sequence belongs to the cathelicidin family.

The protein localises to the secreted. Functionally, exerts antimicrobial activity against both Gram-positive and negative bacteria at concentrations of 2-16 micro molar. Its activity appears to be mediated by its ability to damage bacterial membranes. The chain is Antibacterial peptide PMAP-23 (PMAP23) from Sus scrofa (Pig).